The primary structure comprises 319 residues: Cytochrome c biogenesis protein CcsA (319 aa).

A run of 7 helical transmembrane segments spans residues 9–29 (ILTH…LITL), 44–64 (GVIG…AYSG), 71–91 (LYES…FPYL), 143–163 (MVLG…LLVI), 225–245 (IISL…VWAN), 259–273 (TWAF…IYLH), and 286–306 (AIVA…VNLL).

Belongs to the CcmF/CycK/Ccl1/NrfE/CcsA family. May interact with Ccs1.

Its subcellular location is the plastid. It localises to the chloroplast thylakoid membrane. Functionally, required during biogenesis of c-type cytochromes (cytochrome c6 and cytochrome f) at the step of heme attachment. In Oenothera argillicola (Appalachian evening primrose), this protein is Cytochrome c biogenesis protein CcsA.